Reading from the N-terminus, the 137-residue chain is Basic phospholipase A2 2 (137 aa).

The first 11 residues, 1-11 (LVAVCVSLLGA), serve as a signal peptide directing secretion. Residues 12-19 (ANIPPQPL) constitute a propeptide that is removed on maturation. 7 disulfide bridges follow: Cys-30-Cys-89, Cys-44-Cys-136, Cys-46-Cys-62, Cys-61-Cys-117, Cys-68-Cys-110, Cys-78-Cys-103, and Cys-96-Cys-108. Residues Tyr-45 and Gly-47 each contribute to the Ca(2+) site. Alpha-D-mannopyranose is bound at residue Tyr-48. Gly-49 is a Ca(2+) binding site. His-65 is a catalytic residue. Asp-66 is a Ca(2+) binding site. An alpha-D-mannopyranose-binding site is contributed by Asp-66. The active site involves Asp-111.

The protein belongs to the phospholipase A2 family. Group I subfamily. D49 sub-subfamily. In terms of assembly, homodimer; non-covalently linked. Requires Ca(2+) as cofactor. Post-translationally, homodimerization and interaction of the catalytically important Asp-49 (here Asp-111) with mannose molecules may render this protein inactive. Expressed by the venom gland.

It localises to the secreted. The enzyme catalyses a 1,2-diacyl-sn-glycero-3-phosphocholine + H2O = a 1-acyl-sn-glycero-3-phosphocholine + a fatty acid + H(+). In terms of biological role, snake venom phospholipase A2 (PLA2) that shows anticoagulant and neurotoxic activities. PLA2 catalyzes the calcium-dependent hydrolysis of the 2-acyl groups in 3-sn-phosphoglycerides. This Bungarus caeruleus (Indian krait) protein is Basic phospholipase A2 2.